Consider the following 156-residue polypeptide: tRNA-specific adenosine deaminase (156 aa).

The CMP/dCMP-type deaminase domain occupies 2-120; that stretch reads TNDIYFMTLA…GSLMNLLQQS (119 aa). His53 is a Zn(2+) binding site. Residue Glu55 is the Proton donor of the active site. The Zn(2+) site is built by Cys83 and Cys86.

The protein belongs to the cytidine and deoxycytidylate deaminase family. Homodimer. Requires Zn(2+) as cofactor.

It catalyses the reaction adenosine(34) in tRNA + H2O + H(+) = inosine(34) in tRNA + NH4(+). Catalyzes the deamination of adenosine to inosine at the wobble position 34 of tRNA(Arg2). This is tRNA-specific adenosine deaminase from Staphylococcus aureus (strain Mu50 / ATCC 700699).